Consider the following 767-residue polypeptide: Transducin-like enhancer protein 1 (767 aa).

Disordered stretches follow at residues 1–26 (MFPQNRPPTHLQASVATGAASGPPQS) and 200–346 (ADAE…TSAS). 3 stretches are compositionally biased toward basic and acidic residues: residues 200-209 (ADAEHRERDP), 235-255 (RKTEEKDFGTDYGSDADRSED), and 277-289 (NGVDKPTLQRKDP). The segment at 212-274 (SCLTLPNGER…SPHSVHSYSS (63 aa)) is CCN domain. A compositionally biased stretch (low complexity) spans 294-306 (PNSMTSSSSVSPS). Over residues 324 to 346 (LKSSTPNSQSDLNTPGPSGTSAS) the composition is skewed to polar residues. WD repeat units lie at residues 467 to 498 (GIPRHARQLHVLNHGEVVCAVTISNSTRHVYT), 525 to 555 (NRDNYIRSCKLLPDGRSLIVGGEASTLSIWD), 569 to 599 (SSAPACYALAISPDAKVCFSCCSDGNIVVWD), 611 to 641 (GHTDGASCIDISHDGTKLWTGGLDNTVRCWD), 693 to 723 (LHESCVLSLQFASCGKWFVSTGKDNLLNAWR), and 734 to 764 (KESSSVLSCDVSTDDQFIVTGSGDKKATVYE).

It belongs to the WD repeat Groucho/TLE family. Post-translationally, ubiquitinated by XIAP/BIRC4. As to expression, abundantly expressed in brain, lung, testis and ovary in comparison with liver, heart, kidney and spleen. Ubiquitously expressed in the developing embryo. Present in unfertilized and fertilized eggs.

Its subcellular location is the nucleus. Nuclear effector molecule. This is Transducin-like enhancer protein 1 (esg1) from Xenopus laevis (African clawed frog).